The following is a 76-amino-acid chain: Omega-conotoxin-like TxO5 (76 aa).

An N-terminal signal peptide occupies residues 1 to 22 (MKLTCMVIVAVLFLTAWTFVTA). A propeptide spanning residues 23-50 (ITSNGLENLFPNAHHEMKNPEASKLNKR) is cleaved from the precursor. 3 disulfide bridges follow: Cys51/Cys66, Cys58/Cys70, and Cys65/Cys75.

The protein belongs to the conotoxin O1 superfamily. As to expression, expressed by the venom duct.

It is found in the secreted. Omega-conotoxins act at presynaptic membranes, they bind and block voltage-gated calcium channels (Cav). The protein is Omega-conotoxin-like TxO5 (TXO5) of Conus textile (Cloth-of-gold cone).